Reading from the N-terminus, the 256-residue chain is 5-keto-4-deoxy-D-glucarate aldolase (256 aa).

His-50 serves as the catalytic Proton acceptor. Substrate is bound at residue Gln-151. Glu-153 is a binding site for Mg(2+). The substrate site is built by Ser-178 and Asp-179. Position 179 (Asp-179) interacts with Mg(2+).

This sequence belongs to the HpcH/HpaI aldolase family. KDGluc aldolase subfamily. As to quaternary structure, homohexamer; trimer of dimers. The cofactor is Mg(2+).

It carries out the reaction 5-dehydro-4-deoxy-D-glucarate = 2-hydroxy-3-oxopropanoate + pyruvate. The catalysed reaction is 2-dehydro-3-deoxy-D-glucarate = 2-hydroxy-3-oxopropanoate + pyruvate. It functions in the pathway carbohydrate acid metabolism; galactarate degradation; D-glycerate from galactarate: step 2/3. Its function is as follows. Catalyzes the reversible retro-aldol cleavage of both 5-keto-4-deoxy-D-glucarate and 2-keto-3-deoxy-D-glucarate to pyruvate and tartronic semialdehyde. In Shigella boydii serotype 4 (strain Sb227), this protein is 5-keto-4-deoxy-D-glucarate aldolase.